The primary structure comprises 59 residues: Mitochondrial sheath formation-associated protein (59 aa).

Residues 1 to 6 (MIVLGW) are Mitochondrial intermembrane-facing. 2 helical membrane passes run 2–22 (IVLG…FPEL) and 7–23 (MFFV…PELM). Residues 24–40 (PPTLKWQERWPVQESKT) are Cytoplasmic-facing.

In terms of assembly, interacts with VDAC3.

The protein localises to the mitochondrion outer membrane. Functionally, regulates sperm development. May be involved in mitochondrial sheath formation. This Homo sapiens (Human) protein is Mitochondrial sheath formation-associated protein.